We begin with the raw amino-acid sequence, 951 residues long: Coiled-coil and C2 domain-containing protein 1A (951 aa).

Disordered stretches follow at residues 80-139 (CMRD…LETT), 185-266 (AIDE…RQRD), 306-346 (VDLS…PPPR), and 437-491 (NQDE…TRAQ). Residues 84–104 (PDEDEEEGTDEDDLEADDDLL) show a composition bias toward acidic residues. 3 positions are modified to phosphothreonine: T92, T204, and T206. The segment covering 201–210 (PASTPTYSPA) has biased composition (low complexity). A Phosphoserine; by CDK1 modification is found at S208. Residues S253 and S324 each carry the phosphoserine modification. Over residues 311-333 (LPPPPDQLPPDPPSPPSQPPTPA) the composition is skewed to pro residues. Residues 346–392 (RTLLEALEQRMERYQVAAAQAKSKGDQRKARMHERIVKQYQDAIRAH) are a coiled coil. S455 is modified (phosphoserine). Positions 475 to 488 (SAPTAKAPPKATST) are enriched in low complexity. Residues 484–517 (KATSTRAQQQLAFLEGRKKQLLQAALRAKQKNDV) are a coiled coil. One can recognise a C2 domain in the interval 637-771 (RFEQRTFSVI…EIACEVREIL (135 aa)). Residues 818 to 841 (TQVAGPKGKAPPVPAPARESGNRS) form a disordered region.

This sequence belongs to the CC2D1 family. In terms of processing, phosphorylation on Ser-208 by CDK1 promotes spindle pole localization and association with SCC1/RAD21.

It localises to the cytoplasm. It is found in the nucleus. The protein localises to the cytoskeleton. The protein resides in the microtubule organizing center. Its subcellular location is the centrosome. Functionally, transcription factor that binds specifically to the DRE (dual repressor element) and represses HTR1A gene transcription in neuronal cells. The combination of calcium and ATP specifically inactivates the binding with FRE. May play a role in the altered regulation of HTR1A associated with anxiety and major depression. Mediates HDAC-independent repression of HTR1A promoter in neuronal cell. Performs essential function in controlling functional maturation of synapses. Plays distinct roles depending on its localization. When cytoplasmic, acts as a scaffold protein in the PI3K/PDK1/AKT pathway. Repressor of HTR1A when nuclear. In the centrosome, regulates spindle pole localization of the cohesin subunit SCC1/RAD21, thereby mediating centriole cohesion during mitosis. The sequence is that of Coiled-coil and C2 domain-containing protein 1A (CC2D1A) from Homo sapiens (Human).